The primary structure comprises 177 residues: Large ribosomal subunit protein uL6 (177 aa).

It belongs to the universal ribosomal protein uL6 family. In terms of assembly, part of the 50S ribosomal subunit.

In terms of biological role, this protein binds to the 23S rRNA, and is important in its secondary structure. It is located near the subunit interface in the base of the L7/L12 stalk, and near the tRNA binding site of the peptidyltransferase center. The polypeptide is Large ribosomal subunit protein uL6 (Rhizorhabdus wittichii (strain DSM 6014 / CCUG 31198 / JCM 15750 / NBRC 105917 / EY 4224 / RW1) (Sphingomonas wittichii)).